Here is a 364-residue protein sequence, read N- to C-terminus: MTTMSDLSVDLVGEILSRVPLTSLSAVRCTCKSWNTLSKHQIFGKAELAATKQFLGFTVMDYKVCSLRFDLQGIRNDGDDFVDHGEVYDVFHSDGLLLCVTKDHWRLVVWNPYLGQIRWIRARKQFGYSNMFSLGYNNSNRNHKIIEVSYVYDKTACPQYSEIYDFNSSSWRLVEINPVWFLHSDRVSLKGNTYFFAQDLLKDAKIENYLLCFDFTAERFGPHLPLPVHSYDDVTLSCVRQEQLALLYGNNETDDSLEIWITNQIDPNAVSWSIFLKVDIKPLIGFPKDFDPGSFFIDEEKKVVVVYDLDGHLYSTKKNCAYQRLYIIGEDGYFTSVKIKCSDSPEFSAYAPSLVTYKPTNYAK.

Positions 2–49 (TTMSDLSVDLVGEILSRVPLTSLSAVRCTCKSWNTLSKHQIFGKAELA) constitute an F-box domain.

The protein is F-box protein At1g59680 of Arabidopsis thaliana (Mouse-ear cress).